The sequence spans 187 residues: Tetraheme c-type cytochrome CymA (187 aa).

The Cytoplasmic portion of the chain corresponds to 1-12 (MNWRALFKPSAK). A helical transmembrane segment spans residues 13–33 (YSILALLVVGIVIGVVGYFAT). Topologically, residues 34 to 187 (QQTLHATSTD…KGVAHPYPKG (154 aa)) are periplasmic. Heme c contacts are provided by Cys-46, Cys-49, His-64, Cys-75, Cys-78, His-79, Asp-97, Cys-136, Cys-139, His-140, Cys-173, Cys-176, His-177, and His-182.

This sequence belongs to the NapC/NirT/NrfH family. Homodimer. The cofactor is heme c.

Its subcellular location is the cell inner membrane. The catalysed reaction is a quinol + 2 Fe(III)-[cytochrome c](out) = a quinone + 2 Fe(II)-[cytochrome c](out) + 2 H(+)(out). Its activity is regulated as follows. Spectroscopic studies suggest that CymA requires a non-heme cofactor for quinol oxidation. In terms of biological role, quinol dehydrogenase involved in several anaerobic electron transfer pathways. Acquires electrons from the membrane quinone pool and mediates their transfer to several periplasmic terminal reductases and redox shuttles, including the fumarate reductase FccA, the small tetraheme cytochrome (STC), the c-type cytochrome MtrA, the nitrate reductase NapA (either through NapB or directly), the nitrite reductase NrfA and probably also the DmsE subunit of dimethyl sulfoxide (DMSO) reductase. Required for growth on fumarate and on DMSO, and for the reduction of iron(III), manganese(IV), nitrite and nitrate. Not essential for growth on trimethylamine-N-oxide (TMAO). This is Tetraheme c-type cytochrome CymA from Shewanella oneidensis (strain ATCC 700550 / JCM 31522 / CIP 106686 / LMG 19005 / NCIMB 14063 / MR-1).